The primary structure comprises 383 residues: Succinate--CoA ligase [ADP-forming] subunit beta 2 (383 aa).

Residues 9-231 (RELFKEHGIV…QEDADSLEAR (223 aa)) form the ATP-grasp domain. ATP contacts are provided by residues K45, 52-54 (GRG), C94, and E99. Mg(2+)-binding residues include N187 and D201. Substrate contacts are provided by residues N251 and 308 to 310 (GIT).

The protein belongs to the succinate/malate CoA ligase beta subunit family. As to quaternary structure, heterotetramer of two alpha and two beta subunits. Mg(2+) is required as a cofactor.

It catalyses the reaction succinate + ATP + CoA = succinyl-CoA + ADP + phosphate. The catalysed reaction is GTP + succinate + CoA = succinyl-CoA + GDP + phosphate. The protein operates within carbohydrate metabolism; tricarboxylic acid cycle; succinate from succinyl-CoA (ligase route): step 1/1. Succinyl-CoA synthetase functions in the citric acid cycle (TCA), coupling the hydrolysis of succinyl-CoA to the synthesis of either ATP or GTP and thus represents the only step of substrate-level phosphorylation in the TCA. The beta subunit provides nucleotide specificity of the enzyme and binds the substrate succinate, while the binding sites for coenzyme A and phosphate are found in the alpha subunit. This chain is Succinate--CoA ligase [ADP-forming] subunit beta 2, found in Streptomyces coelicolor (strain ATCC BAA-471 / A3(2) / M145).